The following is a 179-amino-acid chain: ATP synthase subunit delta (179 aa).

Belongs to the ATPase delta chain family. F-type ATPases have 2 components, F(1) - the catalytic core - and F(0) - the membrane proton channel. F(1) has five subunits: alpha(3), beta(3), gamma(1), delta(1), epsilon(1). F(0) has three main subunits: a(1), b(2) and c(10-14). The alpha and beta chains form an alternating ring which encloses part of the gamma chain. F(1) is attached to F(0) by a central stalk formed by the gamma and epsilon chains, while a peripheral stalk is formed by the delta and b chains.

The protein resides in the cell membrane. Functionally, f(1)F(0) ATP synthase produces ATP from ADP in the presence of a proton or sodium gradient. F-type ATPases consist of two structural domains, F(1) containing the extramembraneous catalytic core and F(0) containing the membrane proton channel, linked together by a central stalk and a peripheral stalk. During catalysis, ATP synthesis in the catalytic domain of F(1) is coupled via a rotary mechanism of the central stalk subunits to proton translocation. Its function is as follows. This protein is part of the stalk that links CF(0) to CF(1). It either transmits conformational changes from CF(0) to CF(1) or is implicated in proton conduction. This is ATP synthase subunit delta from Staphylococcus aureus (strain bovine RF122 / ET3-1).